The following is a 354-amino-acid chain: Anthranilate phosphoribosyltransferase (354 aa).

5-phospho-alpha-D-ribose 1-diphosphate-binding positions include Gly94, 97-98 (GD), Thr102, 104-107 (NIST), 122-130 (KHGNRAASS), and Ser134. Anthranilate is bound at residue Gly94. Ser106 provides a ligand contact to Mg(2+). Anthranilate is bound at residue Asn125. Position 180 (Arg180) interacts with anthranilate. Mg(2+) is bound by residues Asp238 and Glu239.

The protein belongs to the anthranilate phosphoribosyltransferase family. In terms of assembly, homodimer. It depends on Mg(2+) as a cofactor.

It carries out the reaction N-(5-phospho-beta-D-ribosyl)anthranilate + diphosphate = 5-phospho-alpha-D-ribose 1-diphosphate + anthranilate. The protein operates within amino-acid biosynthesis; L-tryptophan biosynthesis; L-tryptophan from chorismate: step 2/5. In terms of biological role, catalyzes the transfer of the phosphoribosyl group of 5-phosphorylribose-1-pyrophosphate (PRPP) to anthranilate to yield N-(5'-phosphoribosyl)-anthranilate (PRA). In Streptomyces griseus subsp. griseus (strain JCM 4626 / CBS 651.72 / NBRC 13350 / KCC S-0626 / ISP 5235), this protein is Anthranilate phosphoribosyltransferase.